Here is a 525-residue protein sequence, read N- to C-terminus: GMP synthase [glutamine-hydrolyzing] (525 aa).

Residues 9-207 (RILILDFGSQ…VRDICQCEAL (199 aa)) form the Glutamine amidotransferase type-1 domain. Cys86 acts as the Nucleophile in catalysis. Active-site residues include His181 and Glu183. In terms of domain architecture, GMPS ATP-PPase spans 208 to 400 (WTPAKIIDDA…LGLPYDMLYR (193 aa)). Residue 235-241 (SGGVDSS) participates in ATP binding.

In terms of assembly, homodimer.

The enzyme catalyses XMP + L-glutamine + ATP + H2O = GMP + L-glutamate + AMP + diphosphate + 2 H(+). It participates in purine metabolism; GMP biosynthesis; GMP from XMP (L-Gln route): step 1/1. Catalyzes the synthesis of GMP from XMP. The sequence is that of GMP synthase [glutamine-hydrolyzing] from Enterobacter sp. (strain 638).